Consider the following 178-residue polypeptide: MSRIGKKPVVIPAGVTVTVENSTVTVKGPKGELTREFNPTMAINVEGNELTVTRPNDEKANRTIHGTTRALIANMVEGVNNGFAKTLDIQGVGYRAQKQGNKIVLNLGYSHPIEYTPEQGIEVEVPTNTQIIVRGISKERVGHVAALIRSYRQPEPYKGKGIRYSDEVVRRKEGKTGK.

This sequence belongs to the universal ribosomal protein uL6 family. As to quaternary structure, part of the 50S ribosomal subunit.

This protein binds to the 23S rRNA, and is important in its secondary structure. It is located near the subunit interface in the base of the L7/L12 stalk, and near the tRNA binding site of the peptidyltransferase center. The sequence is that of Large ribosomal subunit protein uL6 from Exiguobacterium sibiricum (strain DSM 17290 / CCUG 55495 / CIP 109462 / JCM 13490 / 255-15).